The sequence spans 405 residues: Glucose-1-phosphate adenylyltransferase 1 (405 aa).

Residues Tyr-96, Gly-161, 176 to 177, and Ser-194 contribute to the alpha-D-glucose 1-phosphate site; that span reads EK.

Belongs to the bacterial/plant glucose-1-phosphate adenylyltransferase family. Homotetramer.

It carries out the reaction alpha-D-glucose 1-phosphate + ATP + H(+) = ADP-alpha-D-glucose + diphosphate. It functions in the pathway glycan biosynthesis; glycogen biosynthesis. Functionally, involved in the biosynthesis of ADP-glucose, a building block required for the elongation reactions to produce glycogen. Catalyzes the reaction between ATP and alpha-D-glucose 1-phosphate (G1P) to produce pyrophosphate and ADP-Glc. The protein is Glucose-1-phosphate adenylyltransferase 1 of Vibrio parahaemolyticus serotype O3:K6 (strain RIMD 2210633).